Here is a 208-residue protein sequence, read N- to C-terminus: MKLVEVKHPLVKHKLGVMREAEIDTKKFRELATEIGSLLTYEATSDLETEKVTINGWNGPVEIDRIKGKKVTVVPILRAGLGMMDGVLEHVPSARISVVGIYRNEETLEPVPYFQKLASDLEERLSIVVDPMLATGGSMIATLDLLKAKGCKHIKVLVLVAAPEGIKALEAAHPDIELYCASIDSHLNEQGYIIPGLGDAGDKIFGTK.

5-phospho-alpha-D-ribose 1-diphosphate-binding positions include arginine 78, arginine 103, and 130–138 (DPMLATGGS). Uracil-binding positions include isoleucine 193 and 198–200 (GDA). Aspartate 199 lines the 5-phospho-alpha-D-ribose 1-diphosphate pocket.

The protein belongs to the UPRTase family. Mg(2+) serves as cofactor.

It catalyses the reaction UMP + diphosphate = 5-phospho-alpha-D-ribose 1-diphosphate + uracil. It participates in pyrimidine metabolism; UMP biosynthesis via salvage pathway; UMP from uracil: step 1/1. Its activity is regulated as follows. Allosterically activated by GTP. Catalyzes the conversion of uracil and 5-phospho-alpha-D-ribose 1-diphosphate (PRPP) to UMP and diphosphate. This is Uracil phosphoribosyltransferase from Haemophilus influenzae (strain PittEE).